Here is a 177-residue protein sequence, read N- to C-terminus: Protein-export protein SecB (177 aa).

The protein belongs to the SecB family. Homotetramer, a dimer of dimers. One homotetramer interacts with 1 SecA dimer.

It is found in the cytoplasm. In terms of biological role, one of the proteins required for the normal export of preproteins out of the cell cytoplasm. It is a molecular chaperone that binds to a subset of precursor proteins, maintaining them in a translocation-competent state. It also specifically binds to its receptor SecA. This Ehrlichia canis (strain Jake) protein is Protein-export protein SecB.